The chain runs to 206 residues: Large ribosomal subunit protein uL4 (206 aa).

This sequence belongs to the universal ribosomal protein uL4 family. Part of the 50S ribosomal subunit.

One of the primary rRNA binding proteins, this protein initially binds near the 5'-end of the 23S rRNA. It is important during the early stages of 50S assembly. It makes multiple contacts with different domains of the 23S rRNA in the assembled 50S subunit and ribosome. Functionally, forms part of the polypeptide exit tunnel. In Bradyrhizobium sp. (strain BTAi1 / ATCC BAA-1182), this protein is Large ribosomal subunit protein uL4.